The sequence spans 194 residues: Imidazoleglycerol-phosphate dehydratase (194 aa).

The protein belongs to the imidazoleglycerol-phosphate dehydratase family.

The protein localises to the cytoplasm. It catalyses the reaction D-erythro-1-(imidazol-4-yl)glycerol 3-phosphate = 3-(imidazol-4-yl)-2-oxopropyl phosphate + H2O. The protein operates within amino-acid biosynthesis; L-histidine biosynthesis; L-histidine from 5-phospho-alpha-D-ribose 1-diphosphate: step 6/9. This is Imidazoleglycerol-phosphate dehydratase from Caldicellulosiruptor saccharolyticus (strain ATCC 43494 / DSM 8903 / Tp8T 6331).